Consider the following 118-residue polypeptide: Small ribosomal subunit protein uS13 (118 aa).

A disordered region spans residues 91–118; sequence HRRSLPVRGQRTKTNARTRKGPRKPIRK.

Belongs to the universal ribosomal protein uS13 family. As to quaternary structure, part of the 30S ribosomal subunit. Forms a loose heterodimer with protein S19. Forms two bridges to the 50S subunit in the 70S ribosome.

Functionally, located at the top of the head of the 30S subunit, it contacts several helices of the 16S rRNA. In the 70S ribosome it contacts the 23S rRNA (bridge B1a) and protein L5 of the 50S subunit (bridge B1b), connecting the 2 subunits; these bridges are implicated in subunit movement. Contacts the tRNAs in the A and P-sites. The sequence is that of Small ribosomal subunit protein uS13 from Marinomonas sp. (strain MWYL1).